The primary structure comprises 142 residues: MRHYEIIFLVHPDQSEQVGGMVERYTKLIEEDGGKIHRLEDWGRRQLAYAINNVHKAHYVMLNVECTGKALAELEDNFRYNDAVIRNLVIRRDEAVTGQSEMLKAEENRSERRERRERPEHDGSADGDDSDSDSDNSDNADE.

The disordered stretch occupies residues 96-142; that stretch reads VTGQSEMLKAEENRSERRERRERPEHDGSADGDDSDSDSDNSDNADE. Residues 103–124 are compositionally biased toward basic and acidic residues; that stretch reads LKAEENRSERRERRERPEHDGS. A compositionally biased stretch (acidic residues) spans 125–142; it reads ADGDDSDSDSDNSDNADE.

This sequence belongs to the bacterial ribosomal protein bS6 family.

Its function is as follows. Binds together with bS18 to 16S ribosomal RNA. The protein is Small ribosomal subunit protein bS6 of Pseudomonas fluorescens (strain Pf0-1).